Here is a 308-residue protein sequence, read N- to C-terminus: Ornithine carbamoyltransferase (308 aa).

Residues 56–59 (STRT), glutamine 83, arginine 107, and 134–137 (HPCQ) each bind carbamoyl phosphate. L-ornithine-binding positions include asparagine 165, aspartate 225, and 229 to 230 (SM). Residues 264–265 (CL) and arginine 292 each bind carbamoyl phosphate.

It belongs to the aspartate/ornithine carbamoyltransferase superfamily. OTCase family.

The protein localises to the cytoplasm. It carries out the reaction carbamoyl phosphate + L-ornithine = L-citrulline + phosphate + H(+). Its pathway is amino-acid biosynthesis; L-arginine biosynthesis; L-arginine from L-ornithine and carbamoyl phosphate: step 1/3. Reversibly catalyzes the transfer of the carbamoyl group from carbamoyl phosphate (CP) to the N(epsilon) atom of ornithine (ORN) to produce L-citrulline. The protein is Ornithine carbamoyltransferase of Nitrobacter winogradskyi (strain ATCC 25391 / DSM 10237 / CIP 104748 / NCIMB 11846 / Nb-255).